The primary structure comprises 298 residues: tRNA (guanine(9)-N1)-methyltransferase (298 aa).

Residues 1–10 (MSDTSENSNA) are compositionally biased toward polar residues. Residues 1-44 (MSDTSENSNAEIPADTSDVKDKPKPIVRAPQFPPPPEGISKSQW) form a disordered region. The 190-residue stretch at 96-285 (PPKVNLNQSD…SVLPPRKLEV (190 aa)) folds into the SAM-dependent MTase TRM10-type domain. S-adenosyl-L-methionine is bound by residues 192–193 (LT), glycine 212, 216–220 (DKNRH), cysteine 224, leucine 238, and 250–252 (KVL). Aspartate 216 acts as the Proton acceptor in catalysis.

It belongs to the class IV-like SAM-binding methyltransferase superfamily. TRM10 family. As to quaternary structure, monomer.

It is found in the cytoplasm. The protein localises to the nucleus. It carries out the reaction guanosine(9) in tRNA + S-adenosyl-L-methionine = N(1)-methylguanosine(9) in tRNA + S-adenosyl-L-homocysteine + H(+). In terms of biological role, S-adenosyl-L-methionine-dependent guanine N(1)-methyltransferase that catalyzes the formation of N(1)-methylguanine at position 9 (m1G9) in cytoplasmic tRNA. This chain is tRNA (guanine(9)-N1)-methyltransferase, found in Kluyveromyces lactis (strain ATCC 8585 / CBS 2359 / DSM 70799 / NBRC 1267 / NRRL Y-1140 / WM37) (Yeast).